Reading from the N-terminus, the 269-residue chain is Phosphate import ATP-binding protein PstB (269 aa).

Residues 21–264 (IEIKDFNFFY…PKDRRTENYI (244 aa)) form the ABC transporter domain. An ATP-binding site is contributed by 55–62 (GPSGCGKT).

This sequence belongs to the ABC transporter superfamily. Phosphate importer (TC 3.A.1.7) family. The complex is composed of two ATP-binding proteins (PstB), two transmembrane proteins (PstC and PstA) and a solute-binding protein (PstS).

The protein resides in the cell membrane. The catalysed reaction is phosphate(out) + ATP + H2O = ADP + 2 phosphate(in) + H(+). Functionally, part of the ABC transporter complex PstSACB involved in phosphate import. Responsible for energy coupling to the transport system. The chain is Phosphate import ATP-binding protein PstB from Mycoplasma capricolum subsp. capricolum (strain California kid / ATCC 27343 / NCTC 10154).